The following is a 220-amino-acid chain: Putative DNA repair glycosylase MJ1434 (220 aa).

Residues Cys-202, Cys-208, Cys-211, and Cys-217 each contribute to the [4Fe-4S] cluster site.

Belongs to the Nth/MutY family. [4Fe-4S] cluster serves as cofactor.

The chain is Putative DNA repair glycosylase MJ1434 from Methanocaldococcus jannaschii (strain ATCC 43067 / DSM 2661 / JAL-1 / JCM 10045 / NBRC 100440) (Methanococcus jannaschii).